A 106-amino-acid chain; its full sequence is ATP-dependent Clp protease adapter protein ClpS (106 aa).

The segment covering 1 to 13 (MPRNTSHEHDHGL) has biased composition (basic and acidic residues). The interval 1–20 (MPRNTSHEHDHGLMVEASKP) is disordered.

This sequence belongs to the ClpS family. As to quaternary structure, binds to the N-terminal domain of the chaperone ClpA.

In terms of biological role, involved in the modulation of the specificity of the ClpAP-mediated ATP-dependent protein degradation. The polypeptide is ATP-dependent Clp protease adapter protein ClpS (Xanthomonas axonopodis pv. citri (strain 306)).